Here is a 278-residue protein sequence, read N- to C-terminus: 2-heptyl-3-hydroxy-4-quinolone dioxygenase AqdC1 (278 aa).

Positions 29–158 (PTIVMLPGWC…GWVDSCRALF (130 aa)) constitute an AB hydrolase-1 domain. His103 serves as a coordination point for substrate. His250 serves as the catalytic Proton donor/acceptor.

It belongs to the AB hydrolase superfamily.

It catalyses the reaction 2-heptyl-3-hydroxy-4(1H)-quinolone + O2 = N-octanoylanthranilate + CO + H(+). Involved in the degradation of the Pseudomonas aeruginosa quorum sensing signal molecules HHQ (2-heptyl-4-quinolone) and PQS (2-heptyl-3-hydroxy-4-quinolone) to anthranilic acid. Catalyzes the cleavage of PQS to form N-octanoylanthranilic acid and carbon monoxide. This Rhodococcus erythropolis (Arthrobacter picolinophilus) protein is 2-heptyl-3-hydroxy-4-quinolone dioxygenase AqdC1.